Here is a 182-residue protein sequence, read N- to C-terminus: Peptidyl-prolyl cis-trans isomerase H (182 aa).

In terms of domain architecture, PPIase cyclophilin-type spans 15–181 (FFDITLGGEP…LDVVIAQCGE (167 aa)).

The protein belongs to the cyclophilin-type PPIase family. PPIase H subfamily.

Its subcellular location is the nucleus. The catalysed reaction is [protein]-peptidylproline (omega=180) = [protein]-peptidylproline (omega=0). Functionally, PPIases accelerate the folding of proteins. It catalyzes the cis-trans isomerization of proline imidic peptide bonds in oligopeptides. In Neurospora crassa (strain ATCC 24698 / 74-OR23-1A / CBS 708.71 / DSM 1257 / FGSC 987), this protein is Peptidyl-prolyl cis-trans isomerase H (cyp-3).